A 73-amino-acid chain; its full sequence is Toxin Td5 (73 aa).

A signal peptide spans 1-7; sequence IGMVVEC. The LCN-type CS-alpha/beta domain occupies 8 to 70; it reads KDGYLVGNDG…IWNSATNRCR (63 aa). 4 cysteine pairs are disulfide-bonded: cysteine 18-cysteine 69, cysteine 22-cysteine 44, cysteine 30-cysteine 50, and cysteine 34-cysteine 52. Arginine 70 carries the arginine amide modification.

Belongs to the long (4 C-C) scorpion toxin superfamily. Sodium channel inhibitor family. Beta subfamily. Expressed by the venom gland.

Its subcellular location is the secreted. Beta toxins bind voltage-independently at site-4 of sodium channels (Nav) and shift the voltage of activation toward more negative potentials thereby affecting sodium channel activation and promoting spontaneous and repetitive firing. In Tityus discrepans (Venezuelan scorpion), this protein is Toxin Td5.